A 303-amino-acid polypeptide reads, in one-letter code: Mycothiol acetyltransferase (303 aa).

N-acetyltransferase domains follow at residues 6–134 and 154–303; these read TSLA…VEGD and NEAY…QSSS. Glu37 serves as a coordination point for 1D-myo-inositol 2-(L-cysteinylamino)-2-deoxy-alpha-D-glucopyranoside. Acetyl-CoA is bound by residues 75-77 and 83-88; these read VVV and RQGYGS. Residues Glu180, Lys221, and Glu233 each contribute to the 1D-myo-inositol 2-(L-cysteinylamino)-2-deoxy-alpha-D-glucopyranoside site. Acetyl-CoA-binding positions include 237–239 and 244–250; these read VGL and RRRGLGD. Residue Tyr271 coordinates 1D-myo-inositol 2-(L-cysteinylamino)-2-deoxy-alpha-D-glucopyranoside. 276–281 contributes to the acetyl-CoA binding site; the sequence is NESARR.

It belongs to the acetyltransferase family. MshD subfamily. In terms of assembly, monomer.

It carries out the reaction 1D-myo-inositol 2-(L-cysteinylamino)-2-deoxy-alpha-D-glucopyranoside + acetyl-CoA = mycothiol + CoA + H(+). In terms of biological role, catalyzes the transfer of acetyl from acetyl-CoA to desacetylmycothiol (Cys-GlcN-Ins) to form mycothiol. This Corynebacterium diphtheriae (strain ATCC 700971 / NCTC 13129 / Biotype gravis) protein is Mycothiol acetyltransferase.